We begin with the raw amino-acid sequence, 538 residues long: [Pyruvate dehydrogenase [acetyl-transferring]]-phosphatase 1, mitochondrial (538 aa).

The transit peptide at 1–71 (MPAPTQLFFP…WWQYTQGRRY (71 aa)) directs the protein to the mitochondrion. One can recognise a PPM-type phosphatase domain in the interval 109-525 (ILGFDSNQLP…DDITIIVVQF (417 aa)). The Mn(2+) site is built by D144 and G145. K202 bears the N6-acetyllysine mark. Positions 418 and 516 each coordinate Mn(2+).

Belongs to the PP2C family. In terms of assembly, heterodimer of a catalytic (PDP1) and a regulatory (PDPR) subunit. Mn(2+) is required as a cofactor. The cofactor is Mg(2+).

Its subcellular location is the mitochondrion. The catalysed reaction is O-phospho-L-seryl-[pyruvate dehydrogenase E1 alpha subunit] + H2O = L-seryl-[pyruvate dehydrogenase E1 alpha subunit] + phosphate. With respect to regulation, magnesium-dependent and calcium-stimulated. PDP1 activity strongly depends on its Ca(2+)-dependent binding to the lipoyl domain of E2 subunit of component of the pyruvate dehydrogenase complex. In terms of biological role, mitochondrial enzyme that catalyzes the dephosphorylation and concomitant reactivation of the alpha subunit of the E1 component of the pyruvate dehydrogenase complex (PDC), thereby stimulating the conversion of pyruvate into acetyl-CoA. This is [Pyruvate dehydrogenase [acetyl-transferring]]-phosphatase 1, mitochondrial (Pdp1) from Mus musculus (Mouse).